Consider the following 492-residue polypeptide: G2/mitotic-specific cyclin CLB2 (492 aa).

The tract at residues 1-176 is disordered; sequence MPQVTKTNNE…QPEVGERSQS (176 aa). Over residues 23-33 the composition is skewed to polar residues; that stretch reads QESISTIKNTT. The segment covering 34–58 has biased composition (low complexity); it reads ISNSQHKQQTQQQISSPPQVSVTSS. A compositionally biased stretch (polar residues) spans 59 to 83; that stretch reads EGVSHVNTRQYLGDVSNQYITNAKP. Positions 111-135 are enriched in low complexity; sequence ASDNNNNGSTSSSSNSSNNNNNDAN. The 127-residue stretch at 208 to 334 folds into the Cyclin N-terminal domain; sequence EIFSYYYELE…MLTILNFDLN (127 aa).

The protein belongs to the cyclin family. Cyclin AB subfamily.

In terms of biological role, 2/mitotic-specific cyclin essential for the control of the cell cycle at the G2/M (mitosis) transition. G2/M cyclins accumulate steadily during G2 and are abruptly destroyed at mitosis. Degradation is necessary for the cell to exit from mitosis. Plays a role in morphogenesis by negatively regulating polarized growth. Through binding to CDC28 regulates cytokinesis, partly by phosphorylation of the actomyosin ring component IQG1. Also involved in the phosphorylation of CDC6 and CDC54. The sequence is that of G2/mitotic-specific cyclin CLB2 (CLB2) from Candida albicans (strain SC5314 / ATCC MYA-2876) (Yeast).